The chain runs to 321 residues: Aspartate carbamoyltransferase catalytic subunit (321 aa).

Residues R65 and T66 each contribute to the carbamoyl phosphate site. K93 is an L-aspartate binding site. R115, H143, and Q146 together coordinate carbamoyl phosphate. Positions 176 and 230 each coordinate L-aspartate. Residues G271 and P272 each coordinate carbamoyl phosphate.

It belongs to the aspartate/ornithine carbamoyltransferase superfamily. ATCase family. As to quaternary structure, heterododecamer (2C3:3R2) of six catalytic PyrB chains organized as two trimers (C3), and six regulatory PyrI chains organized as three dimers (R2).

The enzyme catalyses carbamoyl phosphate + L-aspartate = N-carbamoyl-L-aspartate + phosphate + H(+). It functions in the pathway pyrimidine metabolism; UMP biosynthesis via de novo pathway; (S)-dihydroorotate from bicarbonate: step 2/3. Functionally, catalyzes the condensation of carbamoyl phosphate and aspartate to form carbamoyl aspartate and inorganic phosphate, the committed step in the de novo pyrimidine nucleotide biosynthesis pathway. The sequence is that of Aspartate carbamoyltransferase catalytic subunit from Bartonella quintana (strain Toulouse) (Rochalimaea quintana).